Here is a 1333-residue protein sequence, read N- to C-terminus: DNA-directed RNA polymerase subunit beta' (1333 aa).

Zn(2+) contacts are provided by Cys-60, Cys-62, Cys-75, and Cys-78. 3 residues coordinate Mg(2+): Asp-535, Asp-537, and Asp-539. Zn(2+) contacts are provided by Cys-901, Cys-983, Cys-990, and Cys-993.

This sequence belongs to the RNA polymerase beta' chain family. The RNAP catalytic core consists of 2 alpha, 1 beta, 1 beta' and 1 omega subunit. When a sigma factor is associated with the core the holoenzyme is formed, which can initiate transcription. Mg(2+) serves as cofactor. Requires Zn(2+) as cofactor.

It catalyses the reaction RNA(n) + a ribonucleoside 5'-triphosphate = RNA(n+1) + diphosphate. In terms of biological role, DNA-dependent RNA polymerase catalyzes the transcription of DNA into RNA using the four ribonucleoside triphosphates as substrates. The polypeptide is DNA-directed RNA polymerase subunit beta' (Corynebacterium glutamicum (strain R)).